The chain runs to 1104 residues: Reverse gyrase (1104 aa).

An RG N-terminal-type zinc finger spans residues Met1–Ser39. Positions 11, 14, 29, and 32 each coordinate Zn(2+). Residues Phe75, Asp78, Gln83, Gly103, Gly105, Lys106, Thr107, and Thr108 each contribute to the ADP site. Residues Gln83 and Ala100–Thr107 contribute to the ATP site. The Helicase ATP-binding domain occupies Ala87–Tyr242. The DEAD box signature appears at Asp203 to Asp206. The segment at Gly223 to Pro250 is insert region. The 223-residue stretch at Lys300–Val522 folds into the Helicase C-terminal domain. The tract at residues Arg390–Pro460 is latch region. Positions Asp538 to Gly1104 are topoisomerase I. A Toprim domain is found at Ser542–Ile699. Glu548 is a binding site for Mg(2+). An RG C-terminal-type zinc finger spans residues Leu618–Asp645. The Zn(2+) site is built by Cys621, Cys624, Cys635, and Cys638. Mg(2+) is bound at residue Asp668. Residues Asp715–Met1101 enclose the Topo IA-type catalytic domain. The active-site O-(5'-phospho-DNA)-tyrosine intermediate is the Tyr851.

This sequence in the N-terminal section; belongs to the DEAD box helicase family. DDVD subfamily. It in the C-terminal section; belongs to the type IA topoisomerase family. As to quaternary structure, monomer. Zn(2+) serves as cofactor. Mg(2+) is required as a cofactor.

The protein resides in the cytoplasm. The enzyme catalyses ATP + H2O = ADP + phosphate + H(+). In terms of biological role, modifies the topological state of DNA by introducing positive supercoils in an ATP-dependent process. Increases the linking number in steps of +1. Probably recognizes regions with a low GC content which melt and form a ssDNA bubble, allowing the enzyme to bind and cleave the DNA prior to strand passage; the bubble is probably cleaved by 2 reverse gyrase molecules, one on each strand. Positively supercoils DNA with all NTPS, although it strongly prefers ATP. In the presence of non-hydrolyzable ATP analogs it partially relaxes negative supercoils. Has an intrinsic ATPase activity that is stimulated by DNA; ssDNA is most effective. Binds to single-stranded DNA, transiently cleaves and then rejoins the ends, introducing a positive supercoil in the process. The scissile phosphodiester is attacked by the catalytic tyrosine of the enzyme, resulting in the formation of a DNA-(5'-phosphotyrosyl)-enzyme intermediate. The helicase-like domain is a nucleotide-dependent switch that alternates between a physically closed ATP-bound state with a slight preference for dsDNA, and an open ADP-bound state with a high preference for ssDNA. Whole enzyme has a very poor (k-unwind=0.001 sec(-1)) non-processive helicase activity in the 3'-5' direction that works on short substrates, while the isolated helicase domain has a slightly better helicase activity that works in both directions. Probably involved in rewinding DNA strands in regions of the chromosome that have opened up to allow replication, transcription, DNA repair and/or for DNA protection. The protein is Reverse gyrase of Thermotoga maritima (strain ATCC 43589 / DSM 3109 / JCM 10099 / NBRC 100826 / MSB8).